Reading from the N-terminus, the 193-residue chain is Ion-translocating oxidoreductase complex subunit A (193 aa).

Transmembrane regions (helical) follow at residues 5–25 (LLLLVGTVLINNFVLVKFLGL), 39–59 (IGMGLATTFVMTLASACSYLM), 63–83 (ILIPLNIAYLRTLAFILVIAV), 102–122 (LLGIFLPLITTNCAVLGVALL), 134–154 (IIYGFGAATGFSLVLILFAAM), and 171–191 (SIAMITAGLMSLAFMGFTGLI).

This sequence belongs to the NqrDE/RnfAE family. In terms of assembly, the complex is composed of six subunits: RnfA, RnfB, RnfC, RnfD, RnfE and RnfG.

The protein localises to the cell inner membrane. Functionally, part of a membrane-bound complex that couples electron transfer with translocation of ions across the membrane. This is Ion-translocating oxidoreductase complex subunit A from Aeromonas hydrophila subsp. hydrophila (strain ATCC 7966 / DSM 30187 / BCRC 13018 / CCUG 14551 / JCM 1027 / KCTC 2358 / NCIMB 9240 / NCTC 8049).